Here is a 536-residue protein sequence, read N- to C-terminus: Cytochrome P450 monooxygenase fscF (536 aa).

Residues 9 to 29 form a helical membrane-spanning segment; it reads VSWLCALFTAIALYCIAVAFY. C464 lines the heme pocket.

Belongs to the cytochrome P450 family. Requires heme as cofactor.

The protein resides in the membrane. It functions in the pathway secondary metabolite biosynthesis. In terms of biological role, cytochrome P450 monooxygenase; part of the fragmented gene cluster that mediates the biosynthesis of fusarochromene, a tryptophan-derived metabolite closely related to a group of mycotoxins including fusarochromanone. Within the pathway, fscF catalyzes the epoxidation of desacetylfusarochromene which opens the way to the production of fusarochromanones. The first step of the pathway is the epimerization of L-tryptophan to D-tryptophan in the presence of the NRPS-like tryptophan epimerase fscC. D-tryptophan is subsequently hydroxylated by the tryptophan 6-hydroxylase fscE to yield 6-hydroxytryptophan. The pyrrole ring undergoes cleavaged by the tryptophan 2,3-dioxygenase fscD and is finally converted to 4-hydroxykyrunenine by the hydrolase fscH. The NRPS-like oxidoreductase fscA reduces the carboxyl group to primary alcohol and the DMATS-type prenyltransferase fscG performs prenylation, followed by the formation of a chromene ring catalyzed by the oxidoreductase fscI, which leads to desacetylfusarochromene. Epoxidation by fscF and rearrangement reactions of chromene double bonds convert compound desacetylfusarochromene to fusarochromanones. Although specific acetyltransferases were not found near the fsc gene cluster, several predicted enzymes containing the N-acetyltransferase superfamily domain are present in the genome of F.equiseti. These predicted enzymes may have the potential to convert desacetylfusarochromene to fusarochromene. The sequence is that of Cytochrome P450 monooxygenase fscF from Fusarium equiseti (Fusarium scirpi).